The sequence spans 325 residues: Polyprenyl transferase mpaA (325 aa).

A run of 3 helical transmembrane segments spans residues 27–47 (MPYY…ALKL), 56–76 (VEYI…LCGA), and 108–128 (VEAL…LDLI). The N-linked (GlcNAc...) asparagine glycan is linked to N131. A run of 6 helical transmembrane segments spans residues 134 to 151 (IWGL…YPYL), 159 to 179 (VFIY…ITGW), 192 to 212 (IFTH…YFNT), 240 to 260 (LFLA…VLKI), 262 to 282 (SPWL…MQIV), and 295 to 315 (IHWD…VEVG).

Belongs to the UbiA prenyltransferase family. Requires Mg(2+) as cofactor.

It is found in the golgi apparatus membrane. It catalyses the reaction 5,7-dihydroxy-4-methylphthalide + (2E,6E)-farnesyl diphosphate = 4-farnesyl-3,5-dihydroxy-6-methylphthalide + diphosphate. It functions in the pathway secondary metabolite biosynthesis; terpenoid biosynthesis. Polyprenyl transferase; part of the gene cluster that mediates the biosynthesis of mycophenolic acid (MPA), the first isolated antibiotic natural product in the world obtained from a culture of Penicillium brevicompactum in 1893. MpaA is a Golgi apparatus-associated enzyme that catalyzes the prenylation of 5,7-dihydroxy-4,6-dimethylphthalide (DHMP) to yield farnesyl-DHMP (FDHMP). The first step of the pathway is the synthesis of 5-methylorsellinic acid (5MOA) by the cytosolic polyketide synthase mpaC. 5MOA is then converted to the phthalide compound 5,7-dihydroxy-4,6-dimethylphthalide (DHMP) by the endoplasmic reticulum-bound cytochrome P450 monooxygenase mpaDE. MpaDE first catalyzes hydroxylation of 5-MOA to 4,6-dihydroxy-2-(hydroxymethyl)-3-methylbenzoic acid (DHMB). MpaDE then acts as a lactone synthase that catalyzes the ring closure to convert DHMB into DHMP. The next step is the prenylation of DHMP by the Golgi apparatus-associated prenyltransferase mpaA to yield farnesyl-DHMP (FDHMP). The ER-bound oxygenase mpaB then mediates the oxidative cleavage the C19-C20 double bond in FDHMP to yield FDHMP-3C via a mycophenolic aldehyde intermediate. The O-methyltransferase mpaG catalyzes the methylation of FDHMP-3C to yield MFDHMP-3C. After the cytosolic methylation of FDHMP-3C, MFDHMP-3C enters into peroxisomes probably via free diffusion due to its low molecular weight. Upon a peroxisomal CoA ligation reaction, catalyzed by a beta-oxidation component enzyme acyl-CoA ligase ACL891, MFDHMP-3C-CoA would then be restricted to peroxisomes for the following beta-oxidation pathway steps. The peroxisomal beta-oxidation machinery than converts MFDHMP-3C-CoA into MPA_CoA, via a beta-oxidation chain-shortening process. Finally mpaH acts as a peroxisomal acyl-CoA hydrolase with high substrate specificity toward MPA-CoA to release the final product MPA. The chain is Polyprenyl transferase mpaA from Penicillium roqueforti (strain FM164).